A 606-amino-acid polypeptide reads, in one-letter code: Vitamin B12 transporter BtuB (606 aa).

Residues 1 to 21 form the signal peptide; sequence MKKTLLAVALAPLCLPSQVFA. The short motif at 28 to 35 is the TonB box element; that stretch reads DVMVVTAN. The region spanning 40 to 152 is the TBDR plug domain; that stretch reads PIKNVIAPIS…IGGVLNIITA (113 aa). A TBDR beta-barrel domain is found at 157–606; it reads ESVAEVTAGG…SYYATATYKF (450 aa). The short motif at 589–606 is the TonB C-terminal box element; it reads ETYNVQERSYYATATYKF.

Belongs to the TonB-dependent receptor family. BtuB (TC 1.B.14.3.1) subfamily.

Its subcellular location is the cell outer membrane. In terms of biological role, involved in the active translocation of vitamin B12 (cyanocobalamin) across the outer membrane to the periplasmic space. It derives its energy for transport by interacting with the trans-periplasmic membrane protein TonB. The polypeptide is Vitamin B12 transporter BtuB (Photobacterium profundum (strain SS9)).